A 194-amino-acid chain; its full sequence is Adenine phosphoribosyltransferase (194 aa).

Belongs to the purine/pyrimidine phosphoribosyltransferase family. Homodimer.

The protein resides in the cytoplasm. The enzyme catalyses AMP + diphosphate = 5-phospho-alpha-D-ribose 1-diphosphate + adenine. Its pathway is purine metabolism; AMP biosynthesis via salvage pathway; AMP from adenine: step 1/1. Catalyzes a salvage reaction resulting in the formation of AMP, that is energically less costly than de novo synthesis. The polypeptide is Adenine phosphoribosyltransferase (Albidiferax ferrireducens (strain ATCC BAA-621 / DSM 15236 / T118) (Rhodoferax ferrireducens)).